The following is a 1072-amino-acid chain: Vacuolar membrane protease (1072 aa).

Residues 1–9 lie on the Cytoplasmic side of the membrane; it reads MINPISFRP. A helical transmembrane segment spans residues 10–30; the sequence is GPVTFWTTLIYLALLIPIVII. Topologically, residues 31 to 404 are vacuolar; the sequence is NEKTPAAPKT…SFVLFGLRGM (374 aa). N-linked (GlcNAc...) asparagine glycosylation is found at N48, N116, N119, and N128. Zn(2+) is bound by residues H185 and D197. The active-site Proton acceptor is the E231. E232, E257, and H330 together coordinate Zn(2+). The chain crosses the membrane as a helical span at residues 405–425; it reads FAWSLTLLIATPLVLVGITWL. Over 426-457 the chain is Cytoplasmic; it reads LRNLDKDYFFTSTVKTKEHPEYEAVPIGGWKG. A helical membrane pass occupies residues 458-478; the sequence is FFRFPFALGVAVFFTISSALL. At 479–492 the chain is on the vacuolar side; sequence MNKVNPLIVYSSRY. The chain crosses the membrane as a helical span at residues 493-513; it reads SVWVMMVSIFYFSFWMIMRGA. Residues 514-523 lie on the Cytoplasmic side of the membrane; it reads NFVRPSALHR. Residues 524–544 form a helical membrane-spanning segment; it reads GYANLWLFVFGWIVLVAVTAL. The Vacuolar segment spans residues 545–554; the sequence is EDRRRIAAGY. A helical transmembrane segment spans residues 555–575; the sequence is IFVFLESAIFLSCLISFVELL. Topologically, residues 576–747 are cytoplasmic; it reads AVPRKSSYAL…YDHEQEWSGH (172 aa). The disordered stretch occupies residues 593-713; the sequence is GQEHDHNGYQ…GTNDRGRTTF (121 aa). The segment covering 606 to 617 has biased composition (basic and acidic residues); sequence DSTDEPSLRARA. Residues 643–661 are compositionally biased toward polar residues; it reads GTTNGLSTAPSVAAHSSQP. Residues 748–768 form a helical membrane-spanning segment; the sequence is LPSWAWFFQFLLLGPFMIILA. Over 769 to 789 the chain is Vacuolar; the sequence is AQTGLMLTDAVYQTGSDGSKL. Residues 790 to 810 form a helical membrane-spanning segment; sequence ITPYLIIFVFTVLLILPLTPF. Topologically, residues 811 to 817 are cytoplasmic; that stretch reads IHRVTHH. A helical membrane pass occupies residues 818–838; that stretch reads IPVFLLVVFIVTLTYNLIAFP. Over 839–1072 the chain is Vacuolar; the sequence is FSANNRYKTF…VEGRKAFKIV (234 aa). 2 N-linked (GlcNAc...) asparagine glycosylation sites follow: N932 and N974.

Belongs to the peptidase M28 family. Zn(2+) is required as a cofactor.

It localises to the vacuole membrane. Functionally, may be involved in vacuolar sorting and osmoregulation. In Neurospora crassa (strain ATCC 24698 / 74-OR23-1A / CBS 708.71 / DSM 1257 / FGSC 987), this protein is Vacuolar membrane protease.